Here is a 240-residue protein sequence, read N- to C-terminus: MFSSHASLPIHSRRLAAGLDSRWQQPQIQAIAGSQAIVPTVVEQSGRGERAFDIYSRLLRERIVFLGTGVDDAVADSIVAQLLFLEAEDPEKDIQLYINSPGGSVTAGMAIYDTMQQVAPDVATICFGLAASMGAFLLSGGAQGKRMALPSARIMIHQPLGGAQGQAVDIEIQAREILYHKSTLNDLLAQHTGQPLEKIEVDTDRDFFMSPEEAKAYGLIDQVLTRPTMAITDHNDAVLQ.

Ser-132 functions as the Nucleophile in the catalytic mechanism. Residue His-157 is part of the active site.

This sequence belongs to the peptidase S14 family. As to quaternary structure, fourteen ClpP subunits assemble into 2 heptameric rings which stack back to back to give a disk-like structure with a central cavity, resembling the structure of eukaryotic proteasomes.

Its subcellular location is the cytoplasm. It catalyses the reaction Hydrolysis of proteins to small peptides in the presence of ATP and magnesium. alpha-casein is the usual test substrate. In the absence of ATP, only oligopeptides shorter than five residues are hydrolyzed (such as succinyl-Leu-Tyr-|-NHMec, and Leu-Tyr-Leu-|-Tyr-Trp, in which cleavage of the -Tyr-|-Leu- and -Tyr-|-Trp bonds also occurs).. In terms of biological role, cleaves peptides in various proteins in a process that requires ATP hydrolysis. Has a chymotrypsin-like activity. Plays a major role in the degradation of misfolded proteins. This chain is ATP-dependent Clp protease proteolytic subunit 2, found in Synechococcus elongatus (strain ATCC 33912 / PCC 7942 / FACHB-805) (Anacystis nidulans R2).